The primary structure comprises 509 residues: MIFELILISIVTYYFWHWTFWKRRGLPGPWGVPIFGKAGAMLEDSFPPGYTLQKWTKEYGKIYGFTEGMQKVMVISDPDLVQEILVKQYDNFYGRKHNPVQGDPDKDKDIHIVGAQGFRWKRLRTITAPAFSNGSIKKVLTTMEDSTQELMKKLREESENGKAVNMHLFYQEYTFDVISRVAMGQPDSQMFKNPLLKDVKGFFEHNRWQIWMFSGGFPFAVSFLKWLFIKVGKFGAGPFIVVQKSVTDAVMSRIAQREADKKHGVEPGEAADYIDMFLNARAEVEHFGESNDEFHKSSSYNNRQLTTQEIISQCFVFLVAGFDTTAISLSYVTYFLALNPKIQSKLQDEVDKECPNDEITFDQLSKLKYMDNVIKESLRLFPFASFANSRRCMRNTVIGEQIVEAGVDVMIDTWTLHHDKNVWGNDVEEFKPERWDSPLTPQQAYLSFGAGPRVCLGMRFALLEQKGLLSHILKKYTFETNAKTQLPIKLVGRATARPENLFLSLKPRV.

Residue Cys455 coordinates heme.

Belongs to the cytochrome P450 family. Heme serves as cofactor.

Functionally, cytochromes P450 are a group of heme-thiolate monooxygenases. They oxidize a variety of structurally unrelated compounds, including steroids, fatty acids, and xenobiotics. This is Putative cytochrome P450 CYP13A8 (cyp-13A8) from Caenorhabditis elegans.